The chain runs to 615 residues: Sterol 3-beta-glucosyltransferase UGT80B1 (615 aa).

A disordered region spans residues 1 to 54 (MASNVFDHPLQELEGEDNGVKSEKASLLETSGSVDTTPEDSGHRSSDGHRGLDH). Positions 40–54 (DSGHRSSDGHRGLDH) are enriched in basic and acidic residues.

The protein belongs to the glycosyltransferase 28 family. Expressed in developing seeds, seedlings, leaves and around the apical tip of cotyledons. In embryo, expressed in the seed coat and cotyledons.

The enzyme catalyses a sterol + UDP-alpha-D-glucose = a sterol 3-beta-D-glucoside + UDP + H(+). Functionally, involved in the biosynthesis of sterol glucosides. Catalyzes the synthesis of steryl glycosides (SGs) and acyl steryl glycosides (ASGs) which are the most abundant sterol derivatives in higher plants. Can act on several sterols like sitosterol, campesterol and stigmasterol. Is required for embryonic development, seed suberin accumulation, cutin formation and flavanoid accumulation in the seed coat. Both UGT80A2 and UGT80B1 are required for the normal production of SGs and ASGs in seeds. The protein is Sterol 3-beta-glucosyltransferase UGT80B1 of Arabidopsis thaliana (Mouse-ear cress).